Consider the following 417-residue polypeptide: Blood group Rh(D) polypeptide (417 aa).

11 helical membrane passes run 12 to 32, 44 to 64, 77 to 97, 107 to 127, 130 to 150, 167 to 187, 203 to 223, 238 to 258, 287 to 307, 334 to 354, and 358 to 378; these read CLPLWALTLEAALILLFYFFT, LVASYQVGQDLTVMAAIGLGF, VAFNLFMLALGVQWAILLDGF, VITLFSIRLATMSALSVLISV, VLGKVNLAQLVVMVLVEVTAL, MNMMHIYVFAAYFGLSVAWCL, TIPSLSAMLGALFLWMFWPSF, VFNTYYAVAVSVVTAISGSSL, LIPSPWLAMVLGLVAGLISVG, LLGLLGEIIYIVLLVLDTVGA, and MIGFQVLLSIGELSLAIVIAL.

It belongs to the ammonium transporter (TC 2.A.49) family. Rh subfamily. Post-translationally, palmitoylated. In terms of tissue distribution, restricted to tissues or cell lines expressing erythroid characters.

The protein resides in the cell membrane. Its function is as follows. May be part of an oligomeric complex which is likely to have a transport or channel function in the erythrocyte membrane. This is Blood group Rh(D) polypeptide (RHD) from Homo sapiens (Human).